The primary structure comprises 45 residues: Pseudo-hevein (45 aa).

A Chitin-binding type-1 domain is found at 1–43 (EQCGRQAGGKLCPNNLCCSQYGWCGSSDDYCSPSKNCQSNCKG). 4 cysteine pairs are disulfide-bonded: Cys3–Cys18, Cys12–Cys24, Cys17–Cys31, and Cys37–Cys41.

Functionally, N-acetyl-D-glucosamine / N-acetyl-D-neuraminic acid binding lectin. Can inhibit fungal growth. The sequence is that of Pseudo-hevein from Hevea brasiliensis (Para rubber tree).